The primary structure comprises 601 residues: uncharacterized protein (601 aa).

The span at 24–35 (RKSNVVLKKNKG) shows a compositional bias: basic residues. Disordered regions lie at residues 24-106 (RKSN…LKLD) and 171-219 (YGND…PREE). The segment covering 54 to 81 (SQFSSRDNFRTTQTQASSSSEPSDNTNR) has biased composition (polar residues). Residues 92-106 (TPKKEESNAEKLKLD) are compositionally biased toward basic and acidic residues. Phosphoserine is present on residues Ser-236 and Ser-238. The interval 260 to 283 (RKRKVLSSSSEDDESSSPEDLLKP) is disordered.

Its subcellular location is the nucleus. This is an uncharacterized protein from Schizosaccharomyces pombe (strain 972 / ATCC 24843) (Fission yeast).